The sequence spans 479 residues: (R)-1-hydroxy-2-aminoethylphosphonate ammonia-lyase (479 aa).

Lys-317 carries the post-translational modification N6-(pyridoxal phosphate)lysine.

Belongs to the class-III pyridoxal-phosphate-dependent aminotransferase family. It depends on pyridoxal 5'-phosphate as a cofactor.

The enzyme catalyses (1R)-(2-amino-1-hydroxyethyl)phosphonate = phosphonoacetaldehyde + NH4(+). Functionally, involved in phosphonate degradation. Functions as a lyase that catalyzes an elimination reaction on the naturally occurring compound (R)-1-hydroxy-2-aminoethylphosphonate ((R)-HAEP), releasing ammonia and generating phosphonoacetaldehyde (PAA), which can be then hydrolyzed by PhnX, encoded by an adjacent gene. Thus, catalyzes a reaction that serves to funnel (R)-HAEP into the hydrolytic pathway for aminoethylphosphonate (AEP, the most common biogenic phosphonate) degradation, expanding the scope and the usefulness of the pathway itself. Is not active toward the (S) enantiomer of HAEP or other HAEP-related compounds such as ethanolamine and D,L-isoserine, indicating a very high substrate specificity. In Vibrio splendidus (strain 12B01), this protein is (R)-1-hydroxy-2-aminoethylphosphonate ammonia-lyase.